A 166-amino-acid polypeptide reads, in one-letter code: Large ribosomal subunit protein uL10 (166 aa).

The protein belongs to the universal ribosomal protein uL10 family. Part of the ribosomal stalk of the 50S ribosomal subunit. The N-terminus interacts with L11 and the large rRNA to form the base of the stalk. The C-terminus forms an elongated spine to which L12 dimers bind in a sequential fashion forming a multimeric L10(L12)X complex.

Functionally, forms part of the ribosomal stalk, playing a central role in the interaction of the ribosome with GTP-bound translation factors. This Streptococcus pyogenes serotype M28 (strain MGAS6180) protein is Large ribosomal subunit protein uL10.